A 446-amino-acid polypeptide reads, in one-letter code: ATP-dependent protease ATPase subunit HslU (446 aa).

Residues Ile-17, 59 to 64, Asp-255, Glu-320, and Arg-392 each bind ATP; that span reads GVGKTE.

The protein belongs to the ClpX chaperone family. HslU subfamily. As to quaternary structure, a double ring-shaped homohexamer of HslV is capped on each side by a ring-shaped HslU homohexamer. The assembly of the HslU/HslV complex is dependent on binding of ATP.

The protein localises to the cytoplasm. In terms of biological role, ATPase subunit of a proteasome-like degradation complex; this subunit has chaperone activity. The binding of ATP and its subsequent hydrolysis by HslU are essential for unfolding of protein substrates subsequently hydrolyzed by HslV. HslU recognizes the N-terminal part of its protein substrates and unfolds these before they are guided to HslV for hydrolysis. The protein is ATP-dependent protease ATPase subunit HslU of Pseudomonas fluorescens (strain ATCC BAA-477 / NRRL B-23932 / Pf-5).